Consider the following 304-residue polypeptide: uncharacterized protein (304 aa).

The segment covering 226–244 (SRNSESSRQSNLNSPNDSV) has biased composition (polar residues). A disordered region spans residues 226-263 (SRNSESSRQSNLNSPNDSVKFNEFNKSNKSTKTNPNNI). Over residues 246 to 262 (FNEFNKSNKSTKTNPNN) the composition is skewed to low complexity.

This is an uncharacterized protein from Acanthamoeba polyphaga (Amoeba).